Reading from the N-terminus, the 451-residue chain is NADP-specific glutamate dehydrogenase (451 aa).

Lys-113 is an active-site residue. Position 252 is a phosphoserine (Ser-252).

Belongs to the Glu/Leu/Phe/Val dehydrogenases family. Homohexamer.

The catalysed reaction is L-glutamate + NADP(+) + H2O = 2-oxoglutarate + NH4(+) + NADPH + H(+). This is NADP-specific glutamate dehydrogenase (gdh1) from Schizosaccharomyces pombe (strain 972 / ATCC 24843) (Fission yeast).